The primary structure comprises 559 residues: MDVESSSPSSHALIKKEKGGWRAIKYIIANESFEKLASMSLIGNLSVYLMTKYNLGGVFLVNVINIWFGSCNILTLAGAFVSDAYLGRFWTLLLGSIASFIGMGIFALTAALPSLRPDACIDPSNCSNQPAKWQLGVLFSGLGLLAIGAGGVRPCNIAFGADQFDTSTKKGKAHLETFFNWWYFSFTVALVIALTGVVYIQTNISWVIGFVIPTACLALSITTFVIGQHTYICAKAEGSVFADIVKVVTAACKKRKVKPGSDITFYIGPSNDGSPTTLVRDKHRLRFFDKASIVTNPNELNEDGNAKYKWRLCSVQQVKNLKCVTAILPVWVTGIACFILTDQQNIYGILQAMQMDKTFGPHNFQVPAGWMNLVSMITLAIWISLYECVIIPIVKQITGRKKRLTLKHRIEIVMGIICMIVAGFQEKKRRASALKNGSFVSPVSIVMLLPQFALAGLTEAFSAVALMEFLTVRMPEHMRAVAGAIFFLSSSIASYICTLLINVIDAVTRKEGKSWLGDKDLNKNRLENYFFIIAGIQVANLLYFRLFASRYATENKKGH.

Helical transmembrane passes span 57-77 (GVFLVNVINIWFGSCNILTLA), 92-112 (LLLGSIASFIGMGIFALTAAL), 132-152 (KWQLGVLFSGLGLLAIGAGGV), 178-198 (FFNWWYFSFTVALVIALTGVV), 206-226 (WVIGFVIPTACLALSITTFVI), 321-341 (LKCVTAILPVWVTGIACFILT), 374-394 (VSMITLAIWISLYECVIIPIV), 404-424 (LTLKHRIEIVMGIICMIVAGF), 437-457 (GSFVSPVSIVMLLPQFALAGL), 481-501 (VAGAIFFLSSSIASYICTLLI), and 529-549 (YFFIIAGIQVANLLYFRLFAS).

This sequence belongs to the major facilitator superfamily. Proton-dependent oligopeptide transporter (POT/PTR) (TC 2.A.17) family. As to expression, expressed in flowers.

It localises to the membrane. The polypeptide is Protein NRT1/ PTR FAMILY 2.8 (NPF2.8) (Arabidopsis thaliana (Mouse-ear cress)).